The sequence spans 145 residues: Hemoglobin subunit beta-A (145 aa).

The region spanning 1–145 (MLTAEEKAAV…VANALAHRYH (145 aa)) is the Globin domain. Residues histidine 62 and histidine 91 each contribute to the heme b site.

It belongs to the globin family. As to quaternary structure, heterotetramer of two alpha chains and two beta chains. Red blood cells.

Its function is as follows. Involved in oxygen transport from the lung to the various peripheral tissues. The polypeptide is Hemoglobin subunit beta-A (Bos javanicus (Wild banteng)).